The following is a 414-amino-acid chain: 4-hydroxy-3-methylbut-2-en-1-yl diphosphate synthase (flavodoxin) (414 aa).

[4Fe-4S] cluster contacts are provided by C304, C307, C350, and E357.

Belongs to the IspG family. Requires [4Fe-4S] cluster as cofactor.

It catalyses the reaction (2E)-4-hydroxy-3-methylbut-2-enyl diphosphate + oxidized [flavodoxin] + H2O + 2 H(+) = 2-C-methyl-D-erythritol 2,4-cyclic diphosphate + reduced [flavodoxin]. It participates in isoprenoid biosynthesis; isopentenyl diphosphate biosynthesis via DXP pathway; isopentenyl diphosphate from 1-deoxy-D-xylulose 5-phosphate: step 5/6. Converts 2C-methyl-D-erythritol 2,4-cyclodiphosphate (ME-2,4cPP) into 1-hydroxy-2-methyl-2-(E)-butenyl 4-diphosphate. The polypeptide is 4-hydroxy-3-methylbut-2-en-1-yl diphosphate synthase (flavodoxin) (Aromatoleum aromaticum (strain DSM 19018 / LMG 30748 / EbN1) (Azoarcus sp. (strain EbN1))).